The chain runs to 842 residues: Glycogen phosphorylase, muscle form (842 aa).

Ser2 is modified (N-acetylserine). Ser15 carries the phosphoserine; by PHK; in form phosphorylase A modification. AMP is bound by residues Asp43 and Tyr76. Phosphotyrosine is present on residues Tyr204 and Tyr227. 310–319 (RRFKSSKFGC) contributes to the AMP binding site. Position 430 is a phosphoserine (Ser430). Position 473 is a phosphotyrosine (Tyr473). Ser514 is modified (phosphoserine). Lys681 carries the N6-(pyridoxal phosphate)lysine modification. Phosphoserine occurs at positions 747 and 748.

It belongs to the glycogen phosphorylase family. In terms of assembly, homodimer. Homotetramer; to form the enzymatically active phosphorylase A. Pyridoxal 5'-phosphate is required as a cofactor. Phosphorylation of Ser-15 converts phosphorylase B (unphosphorylated) to phosphorylase A.

It catalyses the reaction [(1-&gt;4)-alpha-D-glucosyl](n) + phosphate = [(1-&gt;4)-alpha-D-glucosyl](n-1) + alpha-D-glucose 1-phosphate. Allosterically regulated through the non-covalent binding of metabolites, being activated by AMP and inhibited by ATP, ADP, and glucose-6-phosphate. The activity is also controlled by post-translational modifications including phosphorylation. Its function is as follows. Allosteric enzyme that catalyzes the rate-limiting step in glycogen catabolism, the phosphorolytic cleavage of glycogen to produce glucose-1-phosphate, and plays a central role in maintaining cellular and organismal glucose homeostasis. The sequence is that of Glycogen phosphorylase, muscle form from Macaca fascicularis (Crab-eating macaque).